The chain runs to 443 residues: C4-dicarboxylate transport protein (443 aa).

The next 9 helical transmembrane spans lie at 10 to 30, 46 to 66, 78 to 98, 143 to 163, 199 to 219, 224 to 244, 291 to 311, 332 to 352, and 354 to 374; these read SLYFQVIVAIVIGILLGHFYP, LIKMVIAPIIFCTVVSGIAGM, YALLYFEIVSTVALLIGLIVV, IVGAFANGDILQVLMFSVIFG, PIGALGAMAFTIGAYGVGSLV, LMICFYITCLLFVLVVLGGIC, VVGLVIPTGYSFNLDGTSIYL, ITLLLVLLLSSKGAAGVTGSG, and IVLAATLSAVGHLPVAGLALI.

This sequence belongs to the dicarboxylate/amino acid:cation symporter (DAACS) (TC 2.A.23) family.

It localises to the cell inner membrane. Its function is as follows. Responsible for the transport of dicarboxylates such as succinate, fumarate, and malate from the periplasm across the membrane. This Pseudomonas fluorescens (strain SBW25) protein is C4-dicarboxylate transport protein.